The chain runs to 231 residues: Coproheme decarboxylase (231 aa).

K44 is covalently cross-linked (Isoglutamyl lysine isopeptide (Lys-Gln) (interchain with Q-Cter in protein Pup)). Residue Y133 is part of the active site. H156 provides a ligand contact to Fe-coproporphyrin III.

This sequence belongs to the ChdC family. Type 2 subfamily. Fe-coproporphyrin III serves as cofactor.

The enzyme catalyses Fe-coproporphyrin III + 2 H2O2 + 2 H(+) = heme b + 2 CO2 + 4 H2O. It catalyses the reaction Fe-coproporphyrin III + H2O2 + H(+) = harderoheme III + CO2 + 2 H2O. The catalysed reaction is harderoheme III + H2O2 + H(+) = heme b + CO2 + 2 H2O. It functions in the pathway porphyrin-containing compound metabolism; protoheme biosynthesis. Functionally, involved in coproporphyrin-dependent heme b biosynthesis. Catalyzes the decarboxylation of Fe-coproporphyrin III (coproheme) to heme b (protoheme IX), the last step of the pathway. The reaction occurs in a stepwise manner with a three-propionate intermediate. In Mycolicibacterium smegmatis (strain ATCC 700084 / mc(2)155) (Mycobacterium smegmatis), this protein is Coproheme decarboxylase.